The following is a 167-amino-acid chain: uncharacterized protein (167 aa).

A divalent metal cation is bound by residues H48, H127, and H131.

This sequence belongs to the DinB family.

This is an uncharacterized protein from Bacillus subtilis (strain 168).